The chain runs to 392 residues: Odorant receptor 9a (392 aa).

Over 1-41 (MSDKVKGKKQEEKDQSLRVQILVYRCMGIDLWSPTMANDRP) the chain is Cytoplasmic. The chain crosses the membrane as a helical span at residues 42–62 (WLTFVTMGPLFLFMVPMFLAA). Residues 63 to 74 (HEYITQVSLLSD) are Extracellular-facing. A helical membrane pass occupies residues 75-95 (TLGSTFASMLTLVKFLLFCYH). Residues 96–141 (RKEFVGLIYHIRAILAKEIEVWPDAREIIEVENQSDQMLSLTYTRC) are Cytoplasmic-facing. Residues 142–162 (FGLAGIFAALKPFVGIILSSI) traverse the membrane as a helical segment. Residues 163–202 (RGDEIHLELPHNGVYPYDLQVVMFYVPTYLWNVMASYSAV) lie on the Extracellular side of the membrane. The chain crosses the membrane as a helical span at residues 203–223 (TMALCVDSLLFFFTYNVCAIF). Topologically, residues 224–268 (KIAKHRMIHLPAVGGKEELEGLVQVLLLHQKGLQIADHIADKYRP) are cytoplasmic. Residues 269-289 (LIFLQFFLSALQICFIGFQVA) form a helical membrane-spanning segment. Over 290–297 (DLFPNPQS) the chain is Extracellular. A helical transmembrane segment spans residues 298-318 (LYFIAFVGSLLIALFIYSKCG). The Cytoplasmic portion of the chain corresponds to 319–362 (ENIKSASLDFGNGLYETNWTDFSPPTKRALLIAAMRAQRPCQMK). A helical transmembrane segment spans residues 363–383 (GYFFEASMATFSTIVRSAVSY). Over 384 to 392 (IMMLRSFNA) the chain is Extracellular.

Belongs to the insect chemoreceptor superfamily. Heteromeric odorant receptor channel (TC 1.A.69) family. Or1a subfamily. Interacts with Orco. Complexes exist early in the endomembrane system in olfactory sensory neurons (OSNs), coupling these complexes to the conserved ciliary trafficking pathway. Expressed in olfactory sensory neurons in the antenna.

It localises to the cell membrane. Odorant receptor which mediates acceptance or avoidance behavior, depending on its substrates. The odorant receptor repertoire encodes a large collection of odor stimuli that vary widely in identity, intensity, and duration. May form a complex with Orco to form odorant-sensing units, providing sensitive and prolonged odorant signaling and calcium permeability. In Drosophila melanogaster (Fruit fly), this protein is Odorant receptor 9a (Or9a).